Here is a 65-residue protein sequence, read N- to C-terminus: Large ribosomal subunit protein bL28 (65 aa).

A disordered region spans residues 1 to 21 (MPGRDQLTGQKALSGNKRSHA).

The protein belongs to the bacterial ribosomal protein bL28 family.

This Metamycoplasma arthritidis (strain 158L3-1) (Mycoplasma arthritidis) protein is Large ribosomal subunit protein bL28.